The primary structure comprises 749 residues: MQTSETVSDTGSTVTLQTSVAGQAAVPTQVVQQVPVQQQVQQVQTVQQVQHVYPAQVQYVEGSDTVYTNGAIRTTTYPYTETQMYSQNTGGNYFDTQGGSAQVTTVVSTHSMVGTGGIQMGVTGGQIISSTGGTYLIGNAMENSGHSVSHTTRASPATIEMAIETLQKSDGLSSHRSSLLNSHLQWLLDNYETAEGVSLPRSTLYNHYLRHCQEHKLDPVNAASFGKLIRSIFMGLRTRRLGTRGNSKYHYYGIRVKPDSPLNRLQEDMQYMAMRQQPMQQKQRYKPMQKVDGVGDGFAGSGQSGASVEQTVIAQSQHHQQFLDASRALPEFAEVEISSLPDGTTFEDIKSLQSLYREHCEAILDVVVNLQFSLIEKLWQTFWRYSPSSPADGSTITESGNLSEIESRLPKSKLILFCKNESIVKWMCNCDHMMYQSLVEILIPDVLRPIPSALTQAVRNFAKSLEGWLSSAMSNIPQRMIQTKVAAVSAFAQTLRRYTSLNHLAQAARAVLQNTSQINQMLNDLNRVDFANVQEQASWVCQCDDSMVQRLETDFKMTLQQQSTLEQWAAWLDNVVTQALKPYEGRPSFPKAARQFLLKWSFYSSMVIRDLTLRSAASFGSFHLIRLLYDEYMFYLVEHRVAQATGESPIAVMGEFGDLNDASPGNMEKDEGSDVESEIEEELDDSVEPPAKREKTELSQAFQVGCMQPSLEGSVQQSLVLNQLHSEHIVTSTQTIRQCSATGNTYTAV.

Residues 183 to 258 (HLQWLLDNYE…YHYYGIRVKP (76 aa)) constitute a DNA-binding region (RFX-type winged-helix).

Belongs to the RFX family.

The protein localises to the nucleus. Functionally, transcription factor required for ciliogenesis and islet cell differentiation during endocrine pancreas development. The sequence is that of Transcription factor RFX3 (rfx3) from Xenopus tropicalis (Western clawed frog).